Reading from the N-terminus, the 182-residue chain is Adenine phosphoribosyltransferase (182 aa).

It belongs to the purine/pyrimidine phosphoribosyltransferase family. In terms of assembly, homodimer.

It localises to the cytoplasm. It catalyses the reaction AMP + diphosphate = 5-phospho-alpha-D-ribose 1-diphosphate + adenine. It participates in purine metabolism; AMP biosynthesis via salvage pathway; AMP from adenine: step 1/1. In terms of biological role, catalyzes a salvage reaction resulting in the formation of AMP, that is energically less costly than de novo synthesis. In Bordetella avium (strain 197N), this protein is Adenine phosphoribosyltransferase.